A 95-amino-acid chain; its full sequence is Aspartyl/glutamyl-tRNA(Asn/Gln) amidotransferase subunit C (95 aa).

Belongs to the GatC family. In terms of assembly, heterotrimer of A, B and C subunits.

The enzyme catalyses L-glutamyl-tRNA(Gln) + L-glutamine + ATP + H2O = L-glutaminyl-tRNA(Gln) + L-glutamate + ADP + phosphate + H(+). It catalyses the reaction L-aspartyl-tRNA(Asn) + L-glutamine + ATP + H2O = L-asparaginyl-tRNA(Asn) + L-glutamate + ADP + phosphate + 2 H(+). In terms of biological role, allows the formation of correctly charged Asn-tRNA(Asn) or Gln-tRNA(Gln) through the transamidation of misacylated Asp-tRNA(Asn) or Glu-tRNA(Gln) in organisms which lack either or both of asparaginyl-tRNA or glutaminyl-tRNA synthetases. The reaction takes place in the presence of glutamine and ATP through an activated phospho-Asp-tRNA(Asn) or phospho-Glu-tRNA(Gln). This chain is Aspartyl/glutamyl-tRNA(Asn/Gln) amidotransferase subunit C, found in Gluconacetobacter diazotrophicus (strain ATCC 49037 / DSM 5601 / CCUG 37298 / CIP 103539 / LMG 7603 / PAl5).